The chain runs to 415 residues: Lipoyl synthase, mitochondrial (415 aa).

The transit peptide at 1–33 (MAASTSHLRSLCSSTRSLSRSGVIVTPIACRGY) directs the protein to the mitochondrion. 7 residues coordinate [4Fe-4S] cluster: Cys-132, Cys-137, Cys-143, Cys-163, Cys-167, Cys-170, and Ser-378. Residues 148–367 (DKSSATATIM…RQRALEMGFL (220 aa)) enclose the Radical SAM core domain.

It belongs to the radical SAM superfamily. Lipoyl synthase family. It depends on [4Fe-4S] cluster as a cofactor.

It localises to the mitochondrion. The enzyme catalyses [[Fe-S] cluster scaffold protein carrying a second [4Fe-4S](2+) cluster] + N(6)-octanoyl-L-lysyl-[protein] + 2 oxidized [2Fe-2S]-[ferredoxin] + 2 S-adenosyl-L-methionine + 4 H(+) = [[Fe-S] cluster scaffold protein] + N(6)-[(R)-dihydrolipoyl]-L-lysyl-[protein] + 4 Fe(3+) + 2 hydrogen sulfide + 2 5'-deoxyadenosine + 2 L-methionine + 2 reduced [2Fe-2S]-[ferredoxin]. The protein operates within protein modification; protein lipoylation via endogenous pathway; protein N(6)-(lipoyl)lysine from octanoyl-[acyl-carrier-protein]: step 2/2. In terms of biological role, catalyzes the radical-mediated insertion of two sulfur atoms into the C-6 and C-8 positions of the octanoyl moiety bound to the lipoyl domains of lipoate-dependent enzymes, thereby converting the octanoylated domains into lipoylated derivatives. The polypeptide is Lipoyl synthase, mitochondrial (Aspergillus clavatus (strain ATCC 1007 / CBS 513.65 / DSM 816 / NCTC 3887 / NRRL 1 / QM 1276 / 107)).